An 89-amino-acid chain; its full sequence is Small ribosomal subunit protein uS15 (89 aa).

The protein belongs to the universal ribosomal protein uS15 family. Part of the 30S ribosomal subunit. Forms a bridge to the 50S subunit in the 70S ribosome, contacting the 23S rRNA.

One of the primary rRNA binding proteins, it binds directly to 16S rRNA where it helps nucleate assembly of the platform of the 30S subunit by binding and bridging several RNA helices of the 16S rRNA. Its function is as follows. Forms an intersubunit bridge (bridge B4) with the 23S rRNA of the 50S subunit in the ribosome. In Serratia proteamaculans (strain 568), this protein is Small ribosomal subunit protein uS15.